Consider the following 43-residue polypeptide: Seed non-specific lipid transfer protein-like (43 aa).

Belongs to the plant LTP family. As to quaternary structure, homodimer.

In terms of biological role, plant non-specific lipid-transfer proteins transfer phospholipids as well as galactolipids across membranes. May play a role in wax or cutin deposition in the cell walls of expanding epidermal cells and certain secretory tissues. This isoform inhibits the hyphal growth of several fungi in vitro. In Raphanus sativus (Radish), this protein is Seed non-specific lipid transfer protein-like.